Reading from the N-terminus, the 501-residue chain is TNF receptor-associated factor 2 (501 aa).

Alanine 2 carries the post-translational modification N-acetylalanine. Serine 5 carries the phosphoserine modification. Threonine 7 bears the Phosphothreonine mark. Serine 11 is modified (phosphoserine). Threonine 22 carries the phosphothreonine modification. A Glycyl lysine isopeptide (Lys-Gly) (interchain with G-Cter in ubiquitin) cross-link involves residue lysine 31. The segment at 34–73 (CSACKNILRRPFQAQCGHRYCSFCLTSILSSGPQNCAACV) adopts an RING-type zinc-finger fold. The residue at position 117 (threonine 117) is a Phosphothreonine; by PKC. TRAF-type zinc fingers lie at residues 124 to 180 (CHEG…VHYE) and 177 to 233 (VHYE…ENLQ). Residues 283–293 (ENIVCVLNREV) form an important for interaction with BIRC2 and BIRC3 region. Positions 298 to 348 (VTAEACSRQHRLDQDKIEALSNKVQQLERSIGLKDLAMADLEQKVSELEVS) form a coiled coil. Lysine 320 is covalently cross-linked (Glycyl lysine isopeptide (Lys-Gly) (interchain with G-Cter in ubiquitin)). Residues 351 to 496 (DGVFIWKISD…DDAIFIKAIV (146 aa)) form the MATH domain.

It belongs to the TNF receptor-associated factor family. A subfamily. Homotrimer. Heterotrimer with TRAF1. Heterotrimer with TRAF3 (via TRAF domain). The domain containing the RING-type and the first TRAF-type zinc finger can also form homodimers (in vitro). Interacts with TNFRSF1B/TNFR2. Interacts with TNFRSF5/CD40. Interacts with TNFRSF4, TNFRSF7/CD27, TNFRSF8/CD30, TNFRSF9/CD137, TNFRSF11A/RANK, TNFRSF13B/TACI, TNFRSF14, TNFRSF16/NGFR, TNFRSF17/BCMA, TNFRSF18/AITR, TNFRSF19/TROY, TNFRSF19L/RELT and EDAR. Stimulation of TNF-alpha receptor TNFRSF1A leads to the formation of two distinct signaling complexes. Plasma membrane-bound complex I is composed of TNFRSF1A, TRADD, RIPK1, TRAF2 and BIRC2/c-IAP1 or BIRC3 which interacts with CHUCK/IKK-alpha, IKBKB/IKK-beta and IKBKG/IKK-gamma promoting cell survival. Subsequently, TRADD, RIPK1 and TRAF2 dissociate from TNFRSF1A and form cytoplasmic complex II with FADD and caspase CASP8 promoting cell apoptosis. Interacts with TRADD. Identified in a complex with TNFRSF1A, RIPK1 and IKBKB/IKK-beta. Interacts with RIPK2. Interacts with BIRC2 and BIRC3 N-terminus; a single BIRC2 or BIRC3 molecule interacts with a heterotrimer formed by TRAF1 and TRAF2, or a TRAF2 homotrimer. Identified in a complex composed of TRAF2, TRAF3, BIRC2 and BIRC3. Interacts with BIRC2; the interaction promotes BIRC2 stability. Interaction with BIRC2 and/or BIRC3 is essential for ubiquitination of IKBKE, degradation of NFKBIA and activation of NF-kappa-B. Within complex I, phosphorylated TRAF2 interacts (via 'Lys-63'-linked polyubiquitin chains) with CHUCK/IKK-alpha, IKBKB/IKK-beta, IKBKG/IKK-gamma TAB2, TAB3 and TAK1 in response to TNF-alpha stimulation. Within complex I, interacts with UXT isoform 1 (via TPQE motif); the interaction prevents the recruitment of FADD and CASP8/caspase 8 to complex I. Forms a complex composed of TNFRSF8/CD30 or TNFRSF1B/TNFR2, and TRAF1, TRAF2 and E3 ligase TRAIP. Within the complex, interacts with TRAIP; the interaction inhibits TRAF2-mediated NF-kappa B activation. Component of a complex composed of TANK and TBK1. Interacts with TRPC4AP. Interacts with MAP3K1/MEKK1, MAP3K5/ASK1 and MAP3K11/MLK3 in response to TNF-alpha stimulation; the interaction leads to JNK activation and interaction with MAP3K5 is inhibited by PRMT1. Component of a complex composed of MAP3K14/NIK BIRC3 and TRAF3; the interaction leads to BIRC2/3-mediated ubiquitination of TRAF3 upon CD40 engagement in a TRAF2-dependent manner. Interacts with MAP3K14/NIK in response to TNF-alpha stimulation; the interaction leads to NF-kappa B activation. Interacts with PEG3; the interaction may promote TRAF2-mediated NF-kappa B activation. Interacts with HIVEP3; the interaction may inhibit TNF-alpha-TRAF2-mediated NF-kappa B and JNK activation. Interacts with TANK/ITRAF; the interaction prevents interaction between TNFRSF1B/TNFR2 and TRAF2. Interacts with deubiquitinating enzyme CYLD; the interaction results in the deubiquitination and inactivation of TRAF2. Interacts with SIAH2; the interaction leads to TRAF2 ubiquitination and degradation. Interacts with E2 conjugating enzyme UBE2N/Ubc13, E3 ligase ITCH and RNF11 in response to TNF-alpha stimulation. Interacts with ubiquitin-editing enzyme TNFAIP3/A20 in response to TNF-alpha stimulation; the interaction promotes TRAF2 dissociation from UBE2N/Ubc13, ITCH, RNF11 and TAX1BP1 and prevents prolonged TRAF-2 ubiquitination. Interacts with TAX1BP1 in response to TNF-alpha stimulation; the interaction promotes TRAF2 dissociation from UBE2N/Ubc13 and TNFAIP3/A20, and prevents prolonged TRAF-2 ubiquitination. Interacts (via C-terminus) with EIF2AK2/PKR (via the kinase catalytic domain). Interacts with deubiquitinating enzyme USP48. Interacts with PTPN2; probably involved in TNF-mediated signaling. Interacts with Toll-like receptor TLR4/3 adapter TICAM1/TRIF; the interaction may promote TICAM1 ubiquitination. Interacts with kinase/endoribonuclease ERN1/IRE1 and DAB2IP in response to ER stress; the interaction requires DAB2IP. Interacts with ERN1/IRE1 and TAOK3 in response to ER stress; the interaction may promote TRAF2 phosphorylation. Interacts (via zinc fingers) with DAB2IP (via C-terminus PER domain) in response to TNF-alpha stimulation. Interacts with CASP8AP2/FLASH. Interacts with NFATC2IP; the interaction may repress IL-4 production in T cells. Interacts with kinase CDK9. Interacts with sphingosine kinase 1 SPHK1. Interacts with kinase TNIK. Interacts with TRAFD1. Interacts with DNA phosphodiesterase TDP2. Interacts with MAVS/IPS1. Interacts with CARD14. Interacts with GPS2. Interacts with XPNPEP3. Interacts with RIPK3. Interacts with RELL2. Interacts with LRRC19. Interacts with GAPDH; promoting TRAF2 ubiquitination. Phosphorylated at several serine residues within the first 128 amino acid residues. Phosphorylated at Thr-117 in response to signaling via TNF and TNFRSF1A. Phosphorylation at Thr-117 is required for 'Lys-63'-linked polyubiquitination, but not for 'Lys-48'-linked polyubiquitination. Phosphorylation at Thr-117 is important for interaction with IKKA and IKKB, activation of IKK and subsequent activation of NF-kappa-B. In terms of processing, undergoes both 'Lys-48'-linked and 'Lys-63'-linked polyubiquitination. Polyubiquitinated via 'Lys-63'-linked ubiquitin in response to TNF signaling; this requires prior phosphorylation at Thr-117. 'Lys-63'-linked polyubiquitination promotes TRAF2-mediated activation of NF-kappa-B. Can be polyubiquitinated at several Lys residues via 'Lys-48'-linked ubiquitin chains in response to TNF signaling, leading to proteasomal degradation. Autoubiquitinated, leading to its subsequent proteasomal degradation. Polyubiquitinated by BIRC2 and SIAH2, leading to its subsequent proteasomal degradation. Not ubiquitinated by BIRC3 or SIAH1. Deubiquitinated by CYLD, a protease that specifically cleaves 'Lys-63'-linked polyubiquitin chains. Ubiquination is inhibited by LRRC19; inhiits proteasomal degradation. Ubiquitinated at Lys-320 by the SCF(FBXL2) complex, leading to its degradation by the proteasome. Ubiquitinated by E3 ubiquitin-protein ligase complex containing FBXO7; leading to repression of NF-kappa-B signaling. In terms of tissue distribution, isoform 1 and isoform 2 are expressed in spleen, adipose tissues, skeletal muscles, thymus, testis, heart, lung, brain. Isoform 2 is very weakly expressed in heart, lung and brain.

The protein localises to the cytoplasm. The catalysed reaction is S-ubiquitinyl-[E2 ubiquitin-conjugating enzyme]-L-cysteine + [acceptor protein]-L-lysine = [E2 ubiquitin-conjugating enzyme]-L-cysteine + N(6)-ubiquitinyl-[acceptor protein]-L-lysine.. It functions in the pathway protein modification; protein ubiquitination. Has very low E3 ubiquitin ligase activity in the absence of sphingosine-1-phosphate. E3 ubiquitin ligase activity is strongly activated by cytoplasmic sphingosine-1-phosphate. Functionally, E3 ubiquitin-protein ligase that regulates activation of NF-kappa-B and JNK and plays a central role in the regulation of cell survival and apoptosis. Catalyzes 'Lys-63'-linked ubiquitination of target proteins, such as BIRC3, IKBKE, MLST8, RIPK1 and TICAM1. Is an essential constituent of several E3 ubiquitin-protein ligase complexes, where it promotes the ubiquitination of target proteins by bringing them into contact with other E3 ubiquitin ligases. Regulates BIRC2 and BIRC3 protein levels by inhibiting their autoubiquitination and subsequent degradation; this does not depend on the TRAF2 RING-type zinc finger domain. Plays a role in mediating activation of NF-kappa-B by EIF2AK2/PKR. In complex with BIRC2 or BIRC3, promotes ubiquitination of IKBKE. Acts as a regulator of mTORC1 and mTORC2 assembly by mediating 'Lys-63'-linked ubiquitination of MLST8, thereby inhibiting formation of the mTORC2 complex, while facilitating assembly of the mTORC1 complex. Required for normal antibody isotype switching from IgM to IgG. This Mus musculus (Mouse) protein is TNF receptor-associated factor 2 (Traf2).